The following is a 365-amino-acid chain: Growth-regulating factor 7 (365 aa).

A QLQ domain is found at 59 to 94 (PFTNAQLKELERQAMIYKYMIASIPVPFDLLVSSPS). Residues 107-151 (DLEPGRCRRTDGKKWRCAKEVVSNHKYCEKHLHRGRPRSRKHVEP) enclose the WRC domain. 2 consecutive short sequence motifs (bipartite nuclear localization signal) follow at residues 112–122 (RCRRTDGKKWR) and 140–147 (RGRPRSRK). Positions 137 to 147 (HLHRGRPRSRK) are enriched in basic residues. Disordered stretches follow at residues 137-187 (HLHR…TLEP) and 332-365 (IESYSLMETPTPSSSPSRVMKKMTSSVSDESSQV). A compositionally biased stretch (polar residues) spans 337–365 (LMETPTPSSSPSRVMKKMTSSVSDESSQV).

It belongs to the GRF family.

It localises to the nucleus. Functionally, transcription activator that plays a role in the regulation of cell expansion in leaf and cotyledons tissues. Component of a network formed by miR396, the GRFs and their interacting factors (GIFs) acting in the regulation of meristem function, at least partially through the control of cell proliferation. The sequence is that of Growth-regulating factor 7 (GRF7) from Arabidopsis thaliana (Mouse-ear cress).